The following is a 583-amino-acid chain: J protein JJJ2 (583 aa).

Residues 11–79 (RTTYYSILGL…KLRYDRDLKI (69 aa)) enclose the J domain. Polar residues predominate over residues 215 to 224 (SYSEDPNSCL). A disordered region spans residues 215–313 (SYSEDPNSCL…SGSHDSNLQS (99 aa)). Phosphoserine is present on serine 229. A compositionally biased stretch (low complexity) spans 240–252 (QQQQQQQQQQQQQ). Basic and acidic residues predominate over residues 262-281 (SPDEEKKNNKEPKRESRVSP). The span at 298–313 (KTSTFSSGSHDSNLQS) shows a compositional bias: polar residues.

It is found in the cytoplasm. The protein localises to the nucleus. This is J protein JJJ2 (JJJ2) from Saccharomyces cerevisiae (strain ATCC 204508 / S288c) (Baker's yeast).